A 7388-amino-acid chain; its full sequence is Microtubule-actin cross-linking factor 1, isoforms 1/2/3/4/5 (7388 aa).

The tract at residues 1 to 47 (MSSSDEETLSERSCRSERSCRSERSYRSERSGSLSPCPPGDTLPWNL) is disordered. The actin-binding stretch occupies residues 1–295 (MSSSDEETLS…VITYVSSIYD (295 aa)). Position 4 is a phosphoserine (S4). Basic and acidic residues predominate over residues 9 to 30 (LSERSCRSERSCRSERSYRSER). A phosphoserine mark is found at S35 and S57. Calponin-homology (CH) domains lie at 78–181 (RVQK…LHFQ) and 194–298 (MSAK…DAFP). LRR repeat units lie at residues 148–171 (QRQV…LTLG) and 240–264 (LVDM…VAER). S280 bears the Phosphoserine mark. LRR repeat units lie at residues 377–399 (LYKL…YHPN) and 441–464 (LNCE…LESG). S814 is modified (phosphoserine). Positions 868–925 (KNTISVKAVCDYRQIEITICKNDECVLEDNSQRTKWKVISPTGNEAMVPSVCFLIPPP) constitute an SH3 domain. The stretch at 1050 to 1073 (ISELKNIRLRLEEYEQRVVKRIQS) is one LRR 5 repeat. S1122 bears the Phosphoserine mark. LRR repeat units lie at residues 1128 to 1154 (VPTL…VYLN), 1187 to 1210 (LADL…VKDK), and 1257 to 1282 (HRVI…DYRA). Residues S1367 and S1376 each carry the phosphoserine modification. Plectin repeat units follow at residues 1577–1621 (LVLL…RELQ), 1654–1696 (LKIL…VLES), 1769–1809 (RLLE…CAIL), 1811–1848 (RQLQ…VILE), and 1855–1886 (GLLW…KILS). Phosphoserine occurs at positions 2006 and 2051. Residues 2051–2085 (SQNKEYPDREDCTTEKGKKTTVETEDSSVENPEQD) are disordered. Over residues 2055-2072 (EYPDREDCTTEKGKKTTV) the composition is skewed to basic and acidic residues. Phosphoserine is present on S2077. Plectin repeat units follow at residues 2290-2332 (LNVL…KLME), 2367-2410 (NVLM…LERQ), 2411-2437 (VVTG…GLVD), 2501-2543 (RLLT…LKRV), 2581-2612 (EVQA…LTNE), and 2686-2730 (LKVL…ASHQ). Disordered stretches follow at residues 3013 to 3034 (EHDS…GKEA) and 3104 to 3174 (SEPF…NECK). The segment covering 3115–3124 (EGLHYQESDG) has biased composition (basic and acidic residues). The residue at position 3122 (S3122) is a Phosphoserine. The span at 3129–3158 (TGPSQISKTDKSFQGTTRQETNYQDSWVTS) shows a compositional bias: polar residues. LRR repeat units follow at residues 3239 to 3262 (LTGE…SIED) and 3264 to 3283 (VTQR…LFKG). The span at 3321 to 3332 (EKTPQEKLRESP) shows a compositional bias: basic and acidic residues. Residues 3321–3350 (EKTPQEKLRESPGSEQTPFMTAPEGKGNGG) are disordered. S3331 carries the post-translational modification Phosphoserine. LRR repeat units lie at residues 3646-3669 (QQDL…IQNR) and 3696-3720 (LTAL…TRVA). 2 Spectrin repeats span residues 3883 to 3957 (ELQK…NSFK) and 4000 to 4108 (QYHQ…SLLQ). At S3927 the chain carries Phosphoserine. One copy of the LRR 13 repeat lies at 3936–3958 (KGDLRFVTISGQKVLDMENSFKE). 2 LRR repeats span residues 4125–4150 (LQSI…VIQE) and 4261–4287 (IQEL…ELSS). A Spectrin 3 repeat occupies 4466 to 4574 (RMEEVHKEAN…TVARQRQLEE (109 aa)). Residues S4495, S4496, and S4521 each carry the phosphoserine modification. LRR repeat units follow at residues 4511–4534 (KAFL…LAGL), 4601–4624 (GVLG…QFML), and 4769–4792 (KKRL…RINR). 2 Spectrin repeats span residues 4800–4904 (TQQF…SRLK) and 4909–5012 (KAQK…SLEE). 2 positions are modified to phosphoserine: S4836 and S4962. LRR repeat units follow at residues 5051-5076 (NKNL…YLRN), 5172-5194 (NKIH…MLEE), and 5281-5304 (KEQV…LIQS). 3 Spectrin repeats span residues 5236–5341 (EDFY…QLQE), 5348–5450 (KFQD…QLED), and 5455–5557 (AKQF…LRTL). A Phosphothreonine modification is found at T5435. The disordered stretch occupies residues 5583–5603 (EELATSGGQSPTGEQIPQFQQ). Residues 5588 to 5603 (SGGQSPTGEQIPQFQQ) are compositionally biased toward polar residues. LRR repeat units lie at residues 5695 to 5719 (MALG…AFSI) and 5804 to 5828 (AQLP…QLRE). Spectrin repeat units follow at residues 5783–5885 (NQFW…ALDE), 6005–6110 (LAEK…KLED), 6115–6219 (AVQY…HKLE), 6225–6328 (LGQF…QQLQ), 6333–6439 (QAQG…KLEE), 6443–6547 (LATE…RSLD), 6552–6658 (RAKQ…KLEE), 6665–6766 (QFMD…RLEQ), and 6771–6874 (AEVF…QRLE). Residues S5808 and S6032 each carry the phosphoserine modification. K6210 carries the N6-acetyllysine modification. One copy of the LRR 24 repeat lies at 6496–6519 (RDQIIELDQTGNQLKFLSQKQDVV). The disordered stretch occupies residues 6951–6981 (PTHAPFIEKSRSGGRKSLSQPTPPPMPILSQ). S6967 carries the post-translational modification Phosphoserine. EF-hand domains follow at residues 7041–7076 (HKKS…SKFP) and 7077–7112 (TTKL…NKDA). Ca(2+)-binding residues include D7054, D7056, D7058, K7060, E7065, D7090, D7092, D7094, Y7096, and E7101. The GAR domain maps to 7117-7189 (TDADKIEDEV…EFLVKNDPCR (73 aa)). Residues 7117 to 7388 (TDADKIEDEV…ASPRTPGPKR (272 aa)) form a C-terminal tail region. A disordered region spans residues 7205-7388 (PEGASQGMTP…ASPRTPGPKR (184 aa)). Over residues 7225 to 7259 (SSRAASPTRSSSSASQSNHSCTSMPSSPATPASGT) the composition is skewed to low complexity. T7254 bears the Phosphothreonine mark. Positions 7275-7299 (TFHSSRTSLAGDTSNSSSPASTGAK) are enriched in polar residues. 2 positions are modified to phosphoserine: S7279 and S7292. Positions 7310–7324 (SRPGSRAGSRAGSRA) are enriched in low complexity. The tract at residues 7313-7328 (GSRAGSRAGSRASSRR) is 4 X 4 AA tandem repeats of [GS]-S-R-[AR]. 2 positions are modified to phosphoserine: S7330 and S7333. Polar residues predominate over residues 7339–7361 (ETQSACSDTSESSAAGGQGNSRR).

The protein belongs to the plakin or cytolinker family. In terms of assembly, isoform 2: Interacts with MAPRE1, CLASP1, CLASP2, AXIN1 and LRP6. Isoform 2: Found in a complex composed of MACF1, APC, AXIN1, CTNNB1 and GSK3B. Isoform 2: Interacts with GOLGA4. Isoform 2: Interacts with CAMSAP3. Post-translationally, phosphorylated on serine residues in the C-terminal tail by GSK3B. Phosphorylation inhibits microtubule-binding and this plays a critical role in bulge stem cell migration and skin wound repair. Wnt-signaling can repress phosphorylation. Isoform 2: Ubiquitously expressed. Isoform 1: Expressed in cell lines NCI-H460, A-549 and HaCaT. Isoform 4: Expressed in heart, lung, pituitary and placenta, not found in brain, kidney, liver, pancreas or skeletal muscle.

The protein resides in the cytoplasm. Its subcellular location is the cytoskeleton. It is found in the golgi apparatus. The protein localises to the cell membrane. It localises to the cell projection. The protein resides in the ruffle membrane. F-actin-binding protein which plays a role in cross-linking actin to other cytoskeletal proteins and also binds to microtubules. Plays an important role in ERBB2-dependent stabilization of microtubules at the cell cortex. Acts as a positive regulator of Wnt receptor signaling pathway and is involved in the translocation of AXIN1 and its associated complex (composed of APC, CTNNB1 and GSK3B) from the cytoplasm to the cell membrane. Has actin-regulated ATPase activity and is essential for controlling focal adhesions (FAs) assembly and dynamics. Interaction with CAMSAP3 at the minus ends of non-centrosomal microtubules tethers microtubules minus-ends to actin filaments, regulating focal adhesion size and cell migration. May play role in delivery of transport vesicles containing GPI-linked proteins from the trans-Golgi network through its interaction with GOLGA4. Plays a key role in wound healing and epidermal cell migration. Required for efficient upward migration of bulge cells in response to wounding and this function is primarily rooted in its ability to coordinate microtubule dynamics and polarize hair follicle stem cells. As a regulator of actin and microtubule arrangement and stabilization, it plays an essential role in neurite outgrowth, branching and spine formation during brain development. In Homo sapiens (Human), this protein is Microtubule-actin cross-linking factor 1, isoforms 1/2/3/4/5.